The chain runs to 86 residues: Small ribosomal subunit protein bS20 (86 aa).

Over residues 1-11 (MANIKSAKKRA) the composition is skewed to basic residues. Residues 1-26 (MANIKSAKKRAITSEKNRQHNASRRS) are disordered.

It belongs to the bacterial ribosomal protein bS20 family.

In terms of biological role, binds directly to 16S ribosomal RNA. The chain is Small ribosomal subunit protein bS20 from Pseudoalteromonas translucida (strain TAC 125).